A 307-amino-acid chain; its full sequence is F-box protein PP2-B7 (307 aa).

The 47-residue stretch at 37-83 folds into the F-box domain; the sequence is PLSLGDLPEECISLIISFTSPRDACVFALVSKTFESAVQSDIVWEKF.

In Arabidopsis thaliana (Mouse-ear cress), this protein is F-box protein PP2-B7 (PP2B7).